The chain runs to 98 residues: La1-like protein 13 (98 aa).

The signal sequence occupies residues 1–24; sequence MERILKPVFLAILIVLSFSSQCMG. Position 97 is a lysine amide (lysine 97).

It belongs to the scorpion La1-like peptide family. In terms of processing, contains 4 disulfide bonds. Expressed by the venom gland.

The protein localises to the secreted. The chain is La1-like protein 13 from Urodacus yaschenkoi (Inland robust scorpion).